Consider the following 225-residue polypeptide: Rho GDP-dissociation inhibitor 3 (225 aa).

It belongs to the Rho GDI family. As to expression, detected only in brain, lung, kidney and testis.

It localises to the cytoplasm. Its function is as follows. Inhibits GDP/GTP exchange reaction of RhoB. Interacts specifically with the GDP- and GTP-bound forms of post-translationally processed Rhob and Rhog proteins, both of which show a growth-regulated expression in mammalian cells. Stimulates the release of the GDP-bound but not the GTP-bound RhoB protein. Also inhibits the GDP/GTP exchange of RhoB but shows less ability to inhibit the dissociation of prebound GTP. In Mus musculus (Mouse), this protein is Rho GDP-dissociation inhibitor 3 (Arhgdig).